The following is a 554-amino-acid chain: Intraflagellar transport protein 56 (554 aa).

The segment at 1–24 (MMLSRAKPAVGRGVQHTDKRKKKG) is disordered. TPR repeat units follow at residues 57–90 (EDTN…ENCN), 92–125 (EVWV…LQNR), 151–184 (TEDQ…NREY), and 468–501 (ANDC…EGKR).

This sequence belongs to the IFT56 family. In terms of assembly, component of the IFT complex B. Interacts with IFT46; the interaction is direct.

Its subcellular location is the cell projection. It is found in the cilium. In terms of biological role, component of the intraflagellar transport (IFT) complex B required for transport of proteins in the motile cilium. Required for transport of specific ciliary cargo proteins related to motility, while it is neither required for IFT complex B assembly or motion nor for cilium assembly. Required for efficient coupling between the accumulation of GLI2 and GLI3 at the ciliary tips and their dissociation from the negative regulator SUFU. Plays a key role in maintaining the integrity of the IFT complex B and the proper ciliary localization of the IFT complex B components. Not required for IFT complex A ciliary localization or function. Essential for maintaining proper microtubule organization within the ciliary axoneme. The chain is Intraflagellar transport protein 56 from Homo sapiens (Human).